The chain runs to 482 residues: tRNA(Ile)-lysidine synthase (482 aa).

ATP is bound at residue 28–33 (SGGPDS).

Belongs to the tRNA(Ile)-lysidine synthase family.

Its subcellular location is the cytoplasm. The enzyme catalyses cytidine(34) in tRNA(Ile2) + L-lysine + ATP = lysidine(34) in tRNA(Ile2) + AMP + diphosphate + H(+). In terms of biological role, ligates lysine onto the cytidine present at position 34 of the AUA codon-specific tRNA(Ile) that contains the anticodon CAU, in an ATP-dependent manner. Cytidine is converted to lysidine, thus changing the amino acid specificity of the tRNA from methionine to isoleucine. This chain is tRNA(Ile)-lysidine synthase, found in Symbiobacterium thermophilum (strain DSM 24528 / JCM 14929 / IAM 14863 / T).